Here is a 320-residue protein sequence, read N- to C-terminus: Cytochrome f (320 aa).

Positions 1 to 35 are cleaved as a signal peptide; sequence MQTRNAFSWIKKEITRSISVLLMIYIITRAPISNA. The heme site is built by Tyr36, Cys56, Cys59, and His60. Residues 286 to 305 form a helical membrane-spanning segment; it reads VQGLLLFLASIILAQILLVL.

It belongs to the cytochrome f family. In terms of assembly, the 4 large subunits of the cytochrome b6-f complex are cytochrome b6, subunit IV (17 kDa polypeptide, petD), cytochrome f and the Rieske protein, while the 4 small subunits are PetG, PetL, PetM and PetN. The complex functions as a dimer. Requires heme as cofactor.

Its subcellular location is the plastid. The protein localises to the chloroplast thylakoid membrane. Its function is as follows. Component of the cytochrome b6-f complex, which mediates electron transfer between photosystem II (PSII) and photosystem I (PSI), cyclic electron flow around PSI, and state transitions. The protein is Cytochrome f (petA) of Pisum sativum (Garden pea).